We begin with the raw amino-acid sequence, 335 residues long: Glutamyl-tRNA reductase (335 aa).

Residues 60 to 63 (TCHR), S110, 115 to 117 (ETE), and Q121 contribute to the substrate site. The active-site Nucleophile is C61. 189–194 (GYSEIN) is an NADP(+) binding site.

Belongs to the glutamyl-tRNA reductase family. Homodimer.

It catalyses the reaction (S)-4-amino-5-oxopentanoate + tRNA(Glu) + NADP(+) = L-glutamyl-tRNA(Glu) + NADPH + H(+). Its pathway is porphyrin-containing compound metabolism; protoporphyrin-IX biosynthesis; 5-aminolevulinate from L-glutamyl-tRNA(Glu): step 1/2. Catalyzes the NADPH-dependent reduction of glutamyl-tRNA(Glu) to glutamate 1-semialdehyde (GSA). The polypeptide is Glutamyl-tRNA reductase (Chlamydia trachomatis serovar A (strain ATCC VR-571B / DSM 19440 / HAR-13)).